We begin with the raw amino-acid sequence, 309 residues long: Mitochondrial glycine transporter (309 aa).

Solcar repeat units lie at residues 2–94 (SNVG…LRAL), 124–207 (LTSQ…IKHE), and 219–304 (QATL…GLML). 6 helical membrane passes run 8 to 33 (LLSGGLSGLATTVCLQPFDLLKTRLQ), 69 to 95 (GTTPSLVRNVPGVALYMTSLTQLRALM), 130 to 155 (LIAGATTRVGVGFLLNPFSVLKARFE), 182 to 205 (GFLASSLRDAPYAGLFVVFYEGIK), 223 to 249 (IHGLSAASAGAIATMATHPFDVIKTKI), and 279 to 297 (GASLRMSRKVLSSAIGWAV).

This sequence belongs to the mitochondrial carrier (TC 2.A.29) family. SLC25A38 subfamily.

The protein localises to the mitochondrion inner membrane. The enzyme catalyses glycine(in) = glycine(out). Its function is as follows. Mitochondrial glycine transporter that imports glycine into the mitochondrial matrix. Plays an important role in providing glycine for the first enzymatic step in heme biosynthesis, the condensation of glycine with succinyl-CoA to produce 5-aminolevulinate (ALA) in the mitochondrial matrix. The protein is Mitochondrial glycine transporter of Laccaria bicolor (strain S238N-H82 / ATCC MYA-4686) (Bicoloured deceiver).